The sequence spans 4007 residues: PKS-NRPS hybrid synthetase psoA (4007 aa).

Positions 8–444 constitute a Ketosynthase family 3 (KS3) domain; sequence KEPIAIIGTG…GTNCHAIVES (437 aa). Active-site for beta-ketoacyl synthase activity residues include Cys-182, His-321, and His-364. The malonyl-CoA:ACP transacylase (MAT) domain stretch occupies residues 575–897; it reads VFTGQGAQWA…VLDRKADDIL (323 aa). Residues 969 to 1105 form an N-terminal hotdog fold region; the sequence is HPLLGSRTPD…GHIRITLAAE (137 aa). A dehydratase (DH) domain region spans residues 969-1147; sequence HPLLGSRTPD…LSYSGPFRAM (179 aa). Residues 969 to 1276 form the PKS/mFAS DH domain; it reads HPLLGSRTPD…MSSFLPASEK (308 aa). The Proton acceptor; for dehydratase activity role is filled by His-1001. A C-terminal hotdog fold region spans residues 1120-1276; sequence DLLPTSVDRF…MSSFLPASEK (157 aa). Catalysis depends on Asp-1179, which acts as the Proton donor; for dehydratase activity. The tract at residues 2131 to 2305 is ketoreductase (KR) domain; sequence TYLLVGLTGH…PASVIDIGMV (175 aa). The Carrier 1 domain occupies 2418-2495; it reads EARKVMENAL…QICDEVVASL (78 aa). Ser-2455 carries the O-(pantetheine 4'-phosphoryl)serine modification. Residues 2513–2550 form a disordered region; it reads PAHKLRPWDKPSADTKRTDSIAPVPRSQIAANGPNGLP. The span at 2518 to 2531 shows a compositional bias: basic and acidic residues; that stretch reads RPWDKPSADTKRTD. Residues 2589 to 2885 form a condensation (C) domain region; sequence QPLSLGQSRL…LETIPLWFKV (297 aa). Residues 3076-3478 are adenylation (A) domain; the sequence is TYVQLAERAN…LGDVARALVQ (403 aa). One can recognise a Carrier 2 domain in the interval 3576 to 3652; that stretch reads TPTEARLRDV…LLAARLDGTS (77 aa). Ser-3612 bears the O-(pantetheine 4'-phosphoryl)serine mark. The interval 3696–3920 is reductase (R) domain; it reads LTGATGFLGG…INVETVSNNI (225 aa).

It in the C-terminal section; belongs to the NRP synthetase family.

It functions in the pathway secondary metabolite biosynthesis. Its function is as follows. PKS-NRPS hybrid synthetase; part of the gene cluster that mediates the biosynthesis of pseurotin A, a competitive inhibitor of chitin synthase and an inducer of nerve-cell proliferation. The PKS-NRPS hybrid synthetase psoA is responsible for the biosynthesis of azaspirene, one of the first intermediates having the 1-oxa-7-azaspiro[4,4]-non-2-ene-4,6-dione core of pseurotin, via condensation of one acetyl-CoA, 4 malonyl-CoA, and a L-phenylalanine molecule. The dual-functional monooxygenase/methyltransferase psoF seems to be involved in the addition of the C3 methyl group onto the pseurotin scaffold. Azaspirene is then converted to synerazol through 4 steps including oxidation of C17 by the cytochrome P450 monooxygenase psoD, O-methylation of the hydroxy group of C8 by the methyltransferase psoC, and the trans-to-cis isomerization of the C13 olefin by the glutathione S-transferase psoE. The fourth step of synerazol production is performed by the dual-functional monooxygenase/methyltransferase psoF which seems to catalyze the epoxidation of the intermediate deepoxy-synerazol. Synerazol can be attacked by a water molecule nonenzymatically at two different positions to yield two diol products, pseurotin A and pseurotin D. The protein is PKS-NRPS hybrid synthetase psoA of Aspergillus fumigatus (strain ATCC MYA-4609 / CBS 101355 / FGSC A1100 / Af293) (Neosartorya fumigata).